The sequence spans 213 residues: 3-isopropylmalate dehydratase small subunit (213 aa).

This sequence belongs to the LeuD family. LeuD type 1 subfamily. As to quaternary structure, heterodimer of LeuC and LeuD.

The enzyme catalyses (2R,3S)-3-isopropylmalate = (2S)-2-isopropylmalate. It functions in the pathway amino-acid biosynthesis; L-leucine biosynthesis; L-leucine from 3-methyl-2-oxobutanoate: step 2/4. Catalyzes the isomerization between 2-isopropylmalate and 3-isopropylmalate, via the formation of 2-isopropylmaleate. The polypeptide is 3-isopropylmalate dehydratase small subunit (Pseudomonas savastanoi pv. phaseolicola (strain 1448A / Race 6) (Pseudomonas syringae pv. phaseolicola (strain 1448A / Race 6))).